We begin with the raw amino-acid sequence, 353 residues long: S-adenosylmethionine:tRNA ribosyltransferase-isomerase (353 aa).

The protein belongs to the QueA family. As to quaternary structure, monomer.

The protein localises to the cytoplasm. It catalyses the reaction 7-aminomethyl-7-carbaguanosine(34) in tRNA + S-adenosyl-L-methionine = epoxyqueuosine(34) in tRNA + adenine + L-methionine + 2 H(+). Its pathway is tRNA modification; tRNA-queuosine biosynthesis. Transfers and isomerizes the ribose moiety from AdoMet to the 7-aminomethyl group of 7-deazaguanine (preQ1-tRNA) to give epoxyqueuosine (oQ-tRNA). This chain is S-adenosylmethionine:tRNA ribosyltransferase-isomerase, found in Baumannia cicadellinicola subsp. Homalodisca coagulata.